Here is a 447-residue protein sequence, read N- to C-terminus: GTPase Der (447 aa).

2 consecutive EngA-type G domains span residues Q4–E165 and L180–N357. Residues G10 to S17, D57 to L61, N119 to E122, G186 to S193, D233 to L237, and N298 to D301 each bind GTP. One can recognise a KH-like domain in the interval K358–K443.

It belongs to the TRAFAC class TrmE-Era-EngA-EngB-Septin-like GTPase superfamily. EngA (Der) GTPase family. As to quaternary structure, associates with the 50S ribosomal subunit.

GTPase that plays an essential role in the late steps of ribosome biogenesis. This is GTPase Der from Rickettsia africae (strain ESF-5).